A 134-amino-acid chain; its full sequence is Large ribosomal subunit protein uL22 (134 aa).

It belongs to the universal ribosomal protein uL22 family. As to quaternary structure, part of the 50S ribosomal subunit. Contacts protein L32.

In terms of biological role, this protein binds specifically to 23S rRNA; its binding is stimulated by other ribosomal proteins, e.g. L4, L17, and L20. It is important during the early stages of 50S assembly. It makes multiple contacts with different domains of the 23S rRNA in the assembled 50S subunit and ribosome. Functionally, the globular domain of the protein is located by the polypeptide exit tunnel on the outside of the subunit while an extended beta-hairpin forms part of the wall of the tunnel. Forms a pair of 'tweezers' with L32 that hold together two different domains of the 23S rRNA. Interacts with the tunnel-blocking modified macrolide azithromycin. Upon binding of the macrolide troleadomycin to the ribosome, the tip of the beta-hairpin is displaced, which severely restricts the tunnel. This and experiments in E.coli have led to the suggestion that it is part of the gating mechanism involved in translation arrest in the absence of the protein export system. This chain is Large ribosomal subunit protein uL22 (rplV), found in Deinococcus radiodurans (strain ATCC 13939 / DSM 20539 / JCM 16871 / CCUG 27074 / LMG 4051 / NBRC 15346 / NCIMB 9279 / VKM B-1422 / R1).